The following is a 709-amino-acid chain: Elongation factor G (709 aa).

The tr-type G domain occupies 10–295 (NQVRNIGIMA…AVVDYLPSPE (286 aa)). GTP-binding positions include 19–26 (AHIDAGKT), 91–95 (DTPGH), and 145–148 (NKMD).

This sequence belongs to the TRAFAC class translation factor GTPase superfamily. Classic translation factor GTPase family. EF-G/EF-2 subfamily.

Its subcellular location is the cytoplasm. Its function is as follows. Catalyzes the GTP-dependent ribosomal translocation step during translation elongation. During this step, the ribosome changes from the pre-translocational (PRE) to the post-translocational (POST) state as the newly formed A-site-bound peptidyl-tRNA and P-site-bound deacylated tRNA move to the P and E sites, respectively. Catalyzes the coordinated movement of the two tRNA molecules, the mRNA and conformational changes in the ribosome. This Bifidobacterium animalis subsp. lactis (strain AD011) protein is Elongation factor G.